The following is a 391-amino-acid chain: Phosphoglycerate kinase (391 aa).

Substrate contacts are provided by residues 21–23, Arg-36, 59–62, Arg-113, and Arg-146; these read DMN and HLGR. ATP-binding positions include Lys-197, Glu-319, and 345-348; that span reads GGDT.

Belongs to the phosphoglycerate kinase family. In terms of assembly, monomer.

It is found in the cytoplasm. The enzyme catalyses (2R)-3-phosphoglycerate + ATP = (2R)-3-phospho-glyceroyl phosphate + ADP. The protein operates within carbohydrate degradation; glycolysis; pyruvate from D-glyceraldehyde 3-phosphate: step 2/5. The polypeptide is Phosphoglycerate kinase (Chromobacterium violaceum (strain ATCC 12472 / DSM 30191 / JCM 1249 / CCUG 213 / NBRC 12614 / NCIMB 9131 / NCTC 9757 / MK)).